A 138-amino-acid polypeptide reads, in one-letter code: Nucleoside diphosphate kinase (138 aa).

ATP-binding residues include K9, F57, R85, T91, R102, and N112. H115 serves as the catalytic Pros-phosphohistidine intermediate.

It belongs to the NDK family. Mg(2+) is required as a cofactor.

The protein resides in the cytoplasm. The enzyme catalyses a 2'-deoxyribonucleoside 5'-diphosphate + ATP = a 2'-deoxyribonucleoside 5'-triphosphate + ADP. The catalysed reaction is a ribonucleoside 5'-diphosphate + ATP = a ribonucleoside 5'-triphosphate + ADP. Functionally, major role in the synthesis of nucleoside triphosphates other than ATP. The ATP gamma phosphate is transferred to the NDP beta phosphate via a ping-pong mechanism, using a phosphorylated active-site intermediate. The polypeptide is Nucleoside diphosphate kinase (Picrophilus torridus (strain ATCC 700027 / DSM 9790 / JCM 10055 / NBRC 100828 / KAW 2/3)).